The sequence spans 402 residues: MSVTLGTPLQSSAFKVLLLGSGELGKEVVISLQRLGVEVHAADRYDHAPAMQVAHFSYVLNMADPAQLKQLIEKVKPNLIVPEIEAIATEVLLEIEANKTATVIPSAKAVNLTMNREGIRRLAAEELGLPTSAYRFADTLESFRAACDDIGYPNFVKPVMSSSGKGQSRVKSFDEVDAAWEYAMQGGRVNQGTVIIESQIDFDFEITLLTVRAKNPETGEIETHYCDPIGHRQDAGDYVESWQPQPMTPAALEEAKRIANKVTTALGGCGIFGVELFIKGDKVWFSEVSPRPHDTGLVTLASQFQSEFELHARAILGLPVNTARHSVAASAVIYAGVDANNLSYSNLNVALAHPDTDLRLFGKPEGFKRRRMGVATARAENTDLARTLAKETADQVSVQTNS.

Residues 23–24 (EL) and Glu-83 contribute to the N(1)-(5-phospho-beta-D-ribosyl)glycinamide site. Residues Arg-116, Lys-157, 162-167 (SSGKGQ), 197-200 (ESQI), and Glu-205 contribute to the ATP site. One can recognise an ATP-grasp domain in the interval 121 to 316 (RLAAEELGLP…EFELHARAIL (196 aa)). Mg(2+)-binding residues include Glu-275 and Glu-287. N(1)-(5-phospho-beta-D-ribosyl)glycinamide is bound by residues Asp-294, Lys-363, and 370-371 (RR).

It belongs to the PurK/PurT family. Homodimer.

It carries out the reaction N(1)-(5-phospho-beta-D-ribosyl)glycinamide + formate + ATP = N(2)-formyl-N(1)-(5-phospho-beta-D-ribosyl)glycinamide + ADP + phosphate + H(+). It participates in purine metabolism; IMP biosynthesis via de novo pathway; N(2)-formyl-N(1)-(5-phospho-D-ribosyl)glycinamide from N(1)-(5-phospho-D-ribosyl)glycinamide (formate route): step 1/1. In terms of biological role, involved in the de novo purine biosynthesis. Catalyzes the transfer of formate to 5-phospho-ribosyl-glycinamide (GAR), producing 5-phospho-ribosyl-N-formylglycinamide (FGAR). Formate is provided by PurU via hydrolysis of 10-formyl-tetrahydrofolate. This is Formate-dependent phosphoribosylglycinamide formyltransferase from Acinetobacter baumannii (strain ATCC 17978 / DSM 105126 / CIP 53.77 / LMG 1025 / NCDC KC755 / 5377).